Reading from the N-terminus, the 264-residue chain is Putative serine carboxypeptidase-like 53 (264 aa).

Positions 1-23 are cleaved as a signal peptide; that stretch reads MGKLQDWSITTCLFLFFLHASQT. Residues Asn-65, Asn-101, Asn-153, and Asn-184 are each glycosylated (N-linked (GlcNAc...) asparagine).

The protein belongs to the peptidase S10 family.

It localises to the secreted. This Arabidopsis thaliana (Mouse-ear cress) protein is Putative serine carboxypeptidase-like 53 (SCPL53).